The chain runs to 715 residues: Palmitoyltransferase ZDHHC5 (715 aa).

The Cytoplasmic segment spans residues 1–13 (MPAESGKRFKPSK). Residues 14–34 (YVPVSAAAIFLVGATTLFFAF) form a helical membrane-spanning segment. Topologically, residues 35–38 (TCPG) are extracellular. A helical membrane pass occupies residues 39–59 (LSLYVSPAVPIYNAIMFLFVL). Over 60-148 (ANFSMATFMD…NCIGRRNYRY (89 aa)) the chain is Cytoplasmic. At Tyr-91 the chain carries Phosphotyrosine. One can recognise a DHHC domain in the interval 104-154 (KWCATCRFYRPPRCSHCSVCDNCVEEFDHHCPWVNNCIGRRNYRYFFLFLL). The active-site S-palmitoyl cysteine intermediate is the Cys-134. Residues 149–169 (FFLFLLSLTAHIMGVFGFGLL) form a helical membrane-spanning segment. Over 170–191 (YVLYHIEELSGVRTAVTMAVMC) the chain is Extracellular. The helical transmembrane segment at 192 to 212 (VAGLFFIPVAGLTGFHVVLVA) threads the bilayer. The Cytoplasmic portion of the chain corresponds to 213 to 715 (RGRTTNEQVT…VGGTTYEISV (503 aa)). The residue at position 247 (Ser-247) is a Phosphoserine. Positions 289-715 (GELRRTKSKG…VGGTTYEISV (427 aa)) are disordered. At Thr-294 the chain carries Phosphothreonine. Phosphoserine is present on residues Ser-296 and Ser-299. The residue at position 303 (Thr-303) is a Phosphothreonine. A Phosphoserine modification is found at Ser-345. 2 positions are modified to phosphothreonine: Thr-348 and Thr-350. The span at 359-373 (SSSSTSAAMPHSSSA) shows a compositional bias: low complexity. Ser-380, Ser-398, Ser-406, and Ser-409 each carry phosphoserine. Thr-411 is subject to Phosphothreonine. 4 positions are modified to phosphoserine: Ser-415, Ser-425, Ser-429, and Ser-432. The span at 422–432 (SSGSRSSSLKS) shows a compositional bias: low complexity. Thr-436 carries the phosphothreonine modification. Over residues 442–478 (QLQSIRSEGTTSTSYKSLANQTRNGSLSYDSLLTPSD) the composition is skewed to polar residues. Phosphoserine occurs at positions 529 and 554. Arg-617 is subject to Omega-N-methylarginine. Ser-621 carries the phosphoserine modification. Thr-659 carries the post-translational modification Phosphothreonine. Residues 666–677 (LKTTYSKSNGQP) show a composition bias toward polar residues. Phosphoserine occurs at positions 684 and 694. Arg-697 carries the post-translational modification Omega-N-methylarginine.

The protein belongs to the DHHC palmitoyltransferase family. ERF2/ZDHHC9 subfamily.

It localises to the cell membrane. It carries out the reaction L-cysteinyl-[protein] + hexadecanoyl-CoA = S-hexadecanoyl-L-cysteinyl-[protein] + CoA. Its function is as follows. Palmitoyltransferase that catalyzes the addition of palmitate onto various protein substrates such as CTNND2, CD36, GSDMD, NLRP3, NOD1, NOD2, STAT3 and S1PR1 thus plays a role in various biological processes including cell adhesion, inflammation, fatty acid uptake, bacterial sensing or cardiac functions. Plays an important role in the regulation of synapse efficacy by mediating palmitoylation of delta-catenin/CTNND2, thereby increasing synaptic delivery and surface stabilization of alpha-amino-3-hydroxy-5-methyl-4-isoxazole propionic acid receptors (AMPARs). Under basal conditions, remains at the synaptic membrane through FYN-mediated phosphorylation that prevents association with endocytic proteins. Neuronal activity enhances the internalization and trafficking of DHHC5 from spines to dendritic shafts where it palmitoylates delta-catenin/CTNND2. Regulates cell adhesion at the plasma membrane by palmitoylating GOLGA7B and DSG2. Plays a role in innate immune response by mediating the palmitoylation of NOD1 and NOD2 and their proper recruitment to the bacterial entry site and phagosomes. Also participates in fatty acid uptake by palmitoylating CD36 and thereby targeting it to the plasma membrane. Upon binding of fatty acids to CD36, gets phosphorylated by LYN leading to inactivation and subsequent CD36 caveolar endocytosis. Controls oligodendrocyte development by catalyzing STAT3 palmitoylation. Acts as a regulator of inflammatory response by mediating palmitoylation of NLRP3 and GSDMD. Palmitoylates NLRP3 to promote inflammasome assembly and activation. Activates pyroptosis by catalyzing palmitoylation of gasdermin-D (GSDMD), thereby promoting membrane translocation and pore formation of GSDMD. This Pan troglodytes (Chimpanzee) protein is Palmitoyltransferase ZDHHC5 (ZDHHC5).